The sequence spans 95 residues: Large ribosomal subunit protein bL27 (95 aa).

Residues 1–10 (MLLTMNLQLF) constitute a propeptide that is removed on maturation. A disordered region spans residues 12–38 (HKKGGGSTSNGRDSESKRLGAKSADGQ).

This sequence belongs to the bacterial ribosomal protein bL27 family. Post-translationally, the N-terminus is cleaved by ribosomal processing cysteine protease Prp.

The chain is Large ribosomal subunit protein bL27 from Enterococcus faecalis (strain ATCC 700802 / V583).